Reading from the N-terminus, the 805-residue chain is Phenylalanine--tRNA ligase beta subunit (805 aa).

The tRNA-binding domain occupies 39 to 148 (APPFTGVVVA…AALRPGTDIR (110 aa)). Residues 399-474 (PVREPVRMRL…RVYGFERIPD (76 aa)) form the B5 domain. 4 residues coordinate Mg(2+): Asp452, Asp458, Glu461, and Glu462. The region spanning 703–804 (SRQPAVVRDL…LVAAHNARQR (102 aa)) is the FDX-ACB domain.

It belongs to the phenylalanyl-tRNA synthetase beta subunit family. Type 1 subfamily. Tetramer of two alpha and two beta subunits. Requires Mg(2+) as cofactor.

Its subcellular location is the cytoplasm. The catalysed reaction is tRNA(Phe) + L-phenylalanine + ATP = L-phenylalanyl-tRNA(Phe) + AMP + diphosphate + H(+). This Bordetella parapertussis (strain 12822 / ATCC BAA-587 / NCTC 13253) protein is Phenylalanine--tRNA ligase beta subunit.